Here is a 211-residue protein sequence, read N- to C-terminus: FMN-dependent NADH:quinone oxidoreductase (211 aa).

Residues S10 and 16–18 (SVS) each bind FMN.

Belongs to the azoreductase type 1 family. As to quaternary structure, homodimer. FMN is required as a cofactor.

The enzyme catalyses 2 a quinone + NADH + H(+) = 2 a 1,4-benzosemiquinone + NAD(+). The catalysed reaction is N,N-dimethyl-1,4-phenylenediamine + anthranilate + 2 NAD(+) = 2-(4-dimethylaminophenyl)diazenylbenzoate + 2 NADH + 2 H(+). Functionally, quinone reductase that provides resistance to thiol-specific stress caused by electrophilic quinones. Its function is as follows. Also exhibits azoreductase activity. Catalyzes the reductive cleavage of the azo bond in aromatic azo compounds to the corresponding amines. The polypeptide is FMN-dependent NADH:quinone oxidoreductase (Parafrankia sp. (strain EAN1pec)).